A 432-amino-acid polypeptide reads, in one-letter code: EF-hand calcium-binding domain-containing protein 3 (432 aa).

EF-hand domains follow at residues 45–80 (AQLE…LGMN) and 81–116 (LNTY…KKLF). Positions 94, 96, 98, 100, and 105 each coordinate Ca(2+). Position 273 is a phosphotyrosine (tyrosine 273). Residues 394–432 (SMNKSSPSNSGLSSPSDFSESDPETGRKRKRKSSRGFRQ) are disordered. A compositionally biased stretch (low complexity) spans 395–411 (MNKSSPSNSGLSSPSDF). A compositionally biased stretch (basic residues) spans 420-432 (RKRKRKSSRGFRQ).

This chain is EF-hand calcium-binding domain-containing protein 3 (Efcab3), found in Mus musculus (Mouse).